The primary structure comprises 165 residues: E3 ubiquitin-protein ligase RNF181 (165 aa).

The RING-type; atypical zinc finger occupies Cys88–Arg129. Residues Asp136–Thr165 are disordered. Thr165 bears the Phosphothreonine mark.

This sequence belongs to the RNF181 family. In terms of assembly, directly interacts with ITGA2B and, as a result, with integrin ITGA2B/ITGB3. There is no evidence that integrin ITGA2B/ITGB3 is an endogenous substrate for RNF181-directed ubiquitination. Post-translationally, auto-ubiquitinated as part of the enzymatic reaction.

It carries out the reaction S-ubiquitinyl-[E2 ubiquitin-conjugating enzyme]-L-cysteine + [acceptor protein]-L-lysine = [E2 ubiquitin-conjugating enzyme]-L-cysteine + N(6)-ubiquitinyl-[acceptor protein]-L-lysine.. Its pathway is protein modification; protein ubiquitination. Its function is as follows. E3 ubiquitin-protein ligase which accepts ubiquitin from an E2 ubiquitin-conjugating enzyme in the form of a thioester and then directly transfers the ubiquitin to targeted substrates. Catalyzes monoubiquitination of 26S proteasome subunit PSMC2/RPT1. The polypeptide is E3 ubiquitin-protein ligase RNF181 (Mus musculus (Mouse)).